The chain runs to 466 residues: MSTRSVSSSSYRRMFGGPGTASRPSSTRSYVTTSTRTYSLGSALRPTTSRTLYTSSPGGVYATRSSAVRLRSGVPGVRLLQDSVDFSLADAINTEFKNTRTNEKVELQELNDRFANYIDKVRFLEQQNKILLAELEQLKGQGKSRLGDLYEEEMRELRRQVDQLTNDKARVEVERDNLAEDIMRLREKLQEEMLQREEAESTLQSFRQDVDNASLARLDLERKVESLQEEIAFLKKLHDEEIQELQAQIQEQHVQIDMDVSKPDLTAALRDVRQQYESVAAKNLQEAEEWYKSKFADLSEAANRNNDALRQAKQESNEYRRQVQTLTCEVDALKGTNESLERQMREMEENFSVEAANYQDTIGRLQDEIQNMKEEMARHLREYQDLLNVKMALDIEIATYRKLLEGEESRISLPLPNFSSLNLRETNLDSLPLVDTHSKRTLLIKTVETRDGQVINETSQHHDDLE.

The segment covering 1–13 (MSTRSVSSSSYRR) has biased composition (low complexity). The interval 1–31 (MSTRSVSSSSYRRMFGGPGTASRPSSTRSYV) is disordered. S2 is subject to N-acetylserine. Positions 2 to 95 (STRSVSSSSY…FSLADAINTE (94 aa)) are head. S5 carries the phosphoserine modification. The residue at position 7 (S7) is a Phosphoserine; by PKA and PKC; alternate. O-linked (GlcNAc) serine; alternate glycosylation is present at S7. Position 8 is a phosphoserine (S8). Residues S9 and S10 each carry the phosphoserine; by PKC modification. A Phosphothreonine modification is found at T20. S25 is modified (phosphoserine; by PKA and PKC). S26 is modified (phosphoserine; by PKC). O-linked (GlcNAc) threonine glycosylation is present at T33. An O-linked (GlcNAc) serine; alternate glycan is attached at S34. S34 is modified (phosphoserine; by PKC; alternate). S39 is modified (phosphoserine; by CaMK2, PKA, PKC and ROCK2). S42 carries the phosphoserine; by PKC modification. S49 carries the post-translational modification Phosphoserine. Y53 carries the phosphotyrosine modification. S55 bears the Phosphoserine mark. Residue S56 is modified to Phosphoserine; by CDK5 and CDK1. Y61 carries the post-translational modification Phosphotyrosine. S66 carries the post-translational modification Phosphoserine; by PKA and PKC. The residue at position 72 (S72) is a Phosphoserine; by AURKB and ROCK2. S83 is modified (phosphoserine; by CaMK2). S87 carries the phosphoserine modification. Residues 96 to 131 (FKNTRTNEKVELQELNDRFANYIDKVRFLEQQNKIL) are coil 1A. A coiled-coil region spans residues 96–131 (FKNTRTNEKVELQELNDRFANYIDKVRFLEQQNKIL). The region spanning 103 to 411 (EKVELQELND…KLLEGEESRI (309 aa)) is the IF rod domain. K104 is covalently cross-linked (Glycyl lysine isopeptide (Lys-Gly) (interchain with G-Cter in SUMO2)). Y117 is subject to Phosphotyrosine. K120, K129, and K139 each carry N6-acetyllysine; alternate. Residues K120 and K129 each carry the N6-succinyllysine; alternate modification. Residues K120, K129, and K139 each participate in a glycyl lysine isopeptide (Lys-Gly) (interchain with G-Cter in SUMO2); alternate cross-link. Residues 132–153 (LAELEQLKGQGKSRLGDLYEEE) are linker 1. The residue at position 144 (S144) is a Phosphoserine. A coiled-coil region spans residues 154-245 (MRELRRQVDQ…KLHDEEIQEL (92 aa)). A coil 1B region spans residues 154-245 (MRELRRQVDQ…KLHDEEIQEL (92 aa)). N6-acetyllysine is present on K168. K188 carries the N6-acetyllysine; alternate modification. K188 bears the N6-succinyllysine; alternate mark. S214 is modified (phosphoserine). K223 is modified (N6-acetyllysine; alternate). K223 is covalently cross-linked (Glycyl lysine isopeptide (Lys-Gly) (interchain with G-Cter in SUMO2); alternate). At S226 the chain carries Phosphoserine. K235 carries the post-translational modification N6-acetyllysine. The interval 246–268 (QAQIQEQHVQIDMDVSKPDLTAA) is linker 12. K262 is covalently cross-linked (Glycyl lysine isopeptide (Lys-Gly) (interchain with G-Cter in SUMO2)). A coil 2 region spans residues 269–407 (LRDVRQQYES…ATYRKLLEGE (139 aa)). K294 bears the N6-acetyllysine; alternate mark. Residue K294 is modified to N6-succinyllysine; alternate. K294 is covalently cross-linked (Glycyl lysine isopeptide (Lys-Gly) (interchain with G-Cter in SUMO2); alternate). S299 carries the phosphoserine modification. A coiled-coil region spans residues 303–407 (NRNNDALRQA…ATYRKLLEGE (105 aa)). K313 participates in a covalent cross-link: Glycyl lysine isopeptide (Lys-Gly) (interchain with G-Cter in SUMO2). The [IL]-x-C-x-x-[DE] motif signature appears at 326 to 329 (LTCE). K373 is subject to N6-acetyllysine; alternate. K373 is covalently cross-linked (Glycyl lysine isopeptide (Lys-Gly) (interchain with G-Cter in SUMO2); alternate). Positions 408 to 466 (ESRISLPLPNFSSLNLRETNLDSLPLVDTHSKRTLLIKTVETRDGQVINETSQHHDDLE) are tail. Phosphoserine occurs at positions 409, 412, 419, and 420. T426 is modified (phosphothreonine). The residue at position 430 (S430) is a Phosphoserine. T436 is subject to Phosphothreonine. S438 carries the post-translational modification Phosphoserine. K439 participates in a covalent cross-link: Glycyl lysine isopeptide (Lys-Gly) (interchain with G-Cter in SUMO2). The residue at position 445 (K445) is an N6-acetyllysine; alternate. Residue K445 is modified to N6-succinyllysine; alternate. K445 is covalently cross-linked (Glycyl lysine isopeptide (Lys-Gly) (interchain with G-Cter in SUMO2); alternate). K445 participates in a covalent cross-link: Glycyl lysine isopeptide (Lys-Gly) (interchain with G-Cter in SUMO1); alternate. T446 and T458 each carry phosphothreonine. S459 is subject to Phosphoserine.

Belongs to the intermediate filament family. As to quaternary structure, homomer assembled from elementary dimers. Identified in complexes that contain VIM, EZR, AHNAK, BFSP1, BFSP2, ANK2, PLEC, PRX and spectrin. Interacts with BCAS3. Interacts with LGSN. Interacts with SYNM. Interacts (via rod region) with PLEC (via CH 1 domain). Interacts with STK33. Interacts with LARP6. Interacts with RAB8B. Interacts with TOR1A; the interaction associates TOR1A with the cytoskeleton. Interacts with TOR1AIP1. Interacts with TOR1AIP1. Interacts with DIAPH1. Interacts with EPPK1; interaction is dependent of higher-order structure of intermediate filament. Interacts with the non-receptor tyrosine kinase SRMS; the interaction leads to phosphorylation of VIM. Interacts with NOD2. Interacts (via head region) with CORO1C. Interacts with HDGF. Interacts with PRKCE (via phorbol-ester/DAG-type 2 domain). Interacts with BFSP2. Interacts with PPL. Interacts with PKP1 and PKP2. Interacts with SCRIB (via PDZ domains); the interaction protects SCRIB from proteasomal degradation and facilitates SCRIB localization to intermediate filaments, the interaction is reduced by cell contact inhibition. In terms of processing, one of the most prominent phosphoproteins in various cells of mesenchymal origin. Phosphorylation is enhanced during cell division, at which time vimentin filaments are significantly reorganized. Phosphorylation by PKN1 inhibits the formation of filaments. Filament disassembly during mitosis is promoted by phosphorylation at Ser-55 as well as by nestin. Phosphorylated at Ser-56 by CDK5 during neutrophil secretion in the cytoplasm. Phosphorylated by STK33. Phosphorylated on tyrosine residues by SRMS. Post-translationally, S-nitrosylation is induced by interferon-gamma and oxidatively-modified low-densitity lipoprotein (LDL(ox)) possibly implicating the iNOS-S100A8/9 transnitrosylase complex.

It is found in the cytoplasm. Its subcellular location is the cytoskeleton. It localises to the nucleus matrix. The protein localises to the cell membrane. In terms of biological role, vimentins are class-III intermediate filaments found in various non-epithelial cells, especially mesenchymal cells. Vimentin is attached to the nucleus, endoplasmic reticulum, and mitochondria, either laterally or terminally. Plays a role in cell directional movement, orientation, cell sheet organization and Golgi complex polarization at the cell migration front. Protects SCRIB from proteasomal degradation and facilitates its localization to intermediate filaments in a cell contact-mediated manner. Its function is as follows. Involved with LARP6 in the stabilization of type I collagen mRNAs for CO1A1 and CO1A2. The chain is Vimentin (VIM) from Bos taurus (Bovine).